A 322-amino-acid chain; its full sequence is MKFVLAIASLLVLSVVYAYPSEIRTFEEFKKAFNKHYVTPEAEQEARQNFLASLEHIEKAGKGRINQFSDMSLEEFKNQYLMSDQAYEALKKEFDLDAGAQACQIGAVNIPNEIDLRALGYVTKIKNQVACGSCWAFSGVATVESNYLSYDNVSLDLSEQELVDCASQHGCGGDTVLNGLRYIQKNGVVEEQSYPYKAREGRCQRPNAKRYGIKDLCQIYPPNGDKIRTYLATKQAALSVIIGIRDLDSFRHYDGRTILQSDNGGKRNFHAINIVGYGSKQGVRYWIIRNSWDTTWGDKGYGYFVADKNLMGIEKFPLAAML.

Positions 1-18 are cleaved as a signal peptide; that stretch reads MKFVLAIASLLVLSVVYA. Residues 19–99 constitute a propeptide that is removed on maturation; sequence YPSEIRTFEE…LKKEFDLDAG (81 aa). A disulfide bridge connects residues C131 and C171. Residue C134 is part of the active site. N-linked (GlcNAc...) asparagine glycosylation occurs at N152. Catalysis depends on residues H270 and N290.

The protein belongs to the peptidase C1 family. As to expression, expressed in the gut.

It is found in the secreted. The enzyme catalyses Broad endopeptidase specificity.. Functionally, probable thiol protease. The polypeptide is Peptidase 1 (Psoroptes ovis (Sheep scab mite)).